The following is a 257-amino-acid chain: MTSLLEIKDLTAFYGPLRAIKDVSLSIQEGSVTALIGPSGCGKSTLLRTLNRMHELSPGAKVKGQVLLDGRDLYQLDPVYVRQEVGMISQRPNPFPTMSIRENVLAGIKLNRKRIHRIQQNELMERCLRSVNLWDEVHNRLGRPGGELSGGQQQRLCIARAIAVSPRVILMDEPCSALDPVSTKAIEQLICKLKEKHTIVIVTHNMQQASRVSDWTAVFNVARSGGSGELVEHDKTEVIFTSPKNEVTLNYISGKFG.

The region spanning 5-246 is the ABC transporter domain; sequence LEIKDLTAFY…EVIFTSPKNE (242 aa). ATP is bound at residue 37–44; it reads GPSGCGKS.

The protein belongs to the ABC transporter superfamily. Phosphate importer (TC 3.A.1.7) family. As to quaternary structure, the complex is composed of two ATP-binding proteins (PstB), two transmembrane proteins (PstC and PstA) and a solute-binding protein (PstS).

It localises to the cell membrane. The catalysed reaction is phosphate(out) + ATP + H2O = ADP + 2 phosphate(in) + H(+). Functionally, part of the ABC transporter complex PstSACB involved in phosphate import. Responsible for energy coupling to the transport system. In Tropheryma whipplei (strain TW08/27) (Whipple's bacillus), this protein is Phosphate import ATP-binding protein PstB.